Reading from the N-terminus, the 469-residue chain is Adenosylhomocysteinase (469 aa).

Positions 58, 133, and 195 each coordinate substrate. An NAD(+)-binding site is contributed by 196–198 (TTT). Residues K225 and D229 each coordinate substrate. NAD(+) is bound by residues N230, 259–264 (GFGDVG), E282, N317, 338–340 (IGH), and N383.

This sequence belongs to the adenosylhomocysteinase family. NAD(+) is required as a cofactor.

The protein resides in the cytoplasm. It carries out the reaction S-adenosyl-L-homocysteine + H2O = L-homocysteine + adenosine. It functions in the pathway amino-acid biosynthesis; L-homocysteine biosynthesis; L-homocysteine from S-adenosyl-L-homocysteine: step 1/1. May play a key role in the regulation of the intracellular concentration of adenosylhomocysteine. The sequence is that of Adenosylhomocysteinase from Rhodopseudomonas palustris (strain ATCC BAA-98 / CGA009).